A 560-amino-acid polypeptide reads, in one-letter code: Membrane protein insertase YidC (560 aa).

Residues 1-21 (MDIKRTILIAALAIVSYVMVL) form a helical membrane-spanning segment. The disordered stretch occupies residues 42-66 (VAPGLPDGVPAANNGASADVPSANA). A run of 5 helical transmembrane segments spans residues 341-361 (LELT…FWLL), 367-387 (LLGN…GLFF), 437-457 (LGGC…YWVL), 468-488 (WMLW…PIIM), and 515-535 (PIIF…YWVV).

The protein belongs to the OXA1/ALB3/YidC family. Type 1 subfamily. As to quaternary structure, interacts with the Sec translocase complex via SecD. Specifically interacts with transmembrane segments of nascent integral membrane proteins during membrane integration.

The protein localises to the cell inner membrane. Functionally, required for the insertion and/or proper folding and/or complex formation of integral membrane proteins into the membrane. Involved in integration of membrane proteins that insert both dependently and independently of the Sec translocase complex, as well as at least some lipoproteins. Aids folding of multispanning membrane proteins. This is Membrane protein insertase YidC from Pseudomonas putida (strain W619).